We begin with the raw amino-acid sequence, 295 residues long: Bifunctional protein FolD (295 aa).

Residues 166–168 (GRS), threonine 195, and valine 236 contribute to the NADP(+) site.

It belongs to the tetrahydrofolate dehydrogenase/cyclohydrolase family. Homodimer.

It catalyses the reaction (6R)-5,10-methylene-5,6,7,8-tetrahydrofolate + NADP(+) = (6R)-5,10-methenyltetrahydrofolate + NADPH. The enzyme catalyses (6R)-5,10-methenyltetrahydrofolate + H2O = (6R)-10-formyltetrahydrofolate + H(+). It functions in the pathway one-carbon metabolism; tetrahydrofolate interconversion. Functionally, catalyzes the oxidation of 5,10-methylenetetrahydrofolate to 5,10-methenyltetrahydrofolate and then the hydrolysis of 5,10-methenyltetrahydrofolate to 10-formyltetrahydrofolate. This Syntrophobacter fumaroxidans (strain DSM 10017 / MPOB) protein is Bifunctional protein FolD.